Reading from the N-terminus, the 234-residue chain is Peroxisomal coenzyme A diphosphatase ndx-8 (234 aa).

The 136-residue stretch at 27 to 162 (EQDAGVLILL…TFLIDEFYMV (136 aa)) folds into the Nudix hydrolase domain. The Nudix box signature appears at 66 to 90 (GGMMDDEDGQNVRRTAIREAYEEVG). Mg(2+)-binding residues include Glu-84 and Glu-88. The chain crosses the membrane as a helical span at residues 170–190 (YPTTYGVTALMCIVVAIGLLG). The short motif at 232–234 (SKI) is the Microbody targeting signal element.

The protein belongs to the Nudix hydrolase family. Requires Mg(2+) as cofactor. Mn(2+) is required as a cofactor.

It localises to the peroxisome membrane. Functionally, coenzyme A diphosphatase which mediates the cleavage of CoA into 3',5'-ADP and 4'-phosphopantetheine. The polypeptide is Peroxisomal coenzyme A diphosphatase ndx-8 (ndx-8) (Caenorhabditis elegans).